We begin with the raw amino-acid sequence, 644 residues long: MLPSWKAFKAHNILRILTRFQSTKIPDAVIGIDLGTTNSAVAIMEGKVPRIIENAEGSRTTPSVVAFTKDGERLVGEPAKRQSVINSENTLFATKRLIGRRFEDAEVQRDINQVPFKIVKHSNGDAWVEARNRTYSPAQIGGFILNKMKETAEAYLAKSVKNAVVTVPAYFNDAQRQATKDAGQIIGLNVLRVVNEPTAAALAYGLDKSEPKVIAVFDLGGGTFDISILDIDNGIFEVKSTNGDTHLGGEDFDIYLLQEIISHFKKETGIDLSNDRMAVQRIREAAEKAKIELSSTLSTEINLPFITADAAGPKHIRMPFSRVQLENITAPLIDRTVDPVKKALKDARITASDISDVLLVGGMSRMPKVADTVKKLFGKDASKAVNPDEAVALGAAIQAAVLSGEVTDVLLLDVTPLSLGIETLGGVFTKLIPRNSTIPNKKSQIFSTAASGQTSVEVKVFQGERELVKDNKLIGNFTLAGIPPAPKGTPQIEVTFDIDANGIINVSAKDLASHKDSSITVAGASGLSDTEIDRMVNEAERYKNQDRARRNAIETANKADQLANDTENSIKEFEGKLDKTDSQRLKDQISSLRELVSRSQAGDEVNDDDVGTKIDNLRTSSMKLFEQLYKNSDNPETKNGRENK.

Belongs to the heat shock protein 70 family.

It localises to the mitochondrion matrix. Its subcellular location is the mitochondrion nucleoid. Functionally, plays a role in facilitating the assembly of some protein complexes inside the mitochondria. It may initiate the events that lead to refolding of imported precursors in the matrix space. This Saccharomyces cerevisiae (strain ATCC 204508 / S288c) (Baker's yeast) protein is Heat shock protein SSC3, mitochondrial (ECM10).